The following is a 112-amino-acid chain: Large ribosomal subunit protein eL34A (112 aa).

The protein belongs to the eukaryotic ribosomal protein eL34 family. As to quaternary structure, component of the large ribosomal subunit (LSU). Mature yeast ribosomes consist of a small (40S) and a large (60S) subunit. The 40S small subunit contains 1 molecule of ribosomal RNA (18S rRNA) and at least 33 different proteins. The large 60S subunit contains 3 rRNA molecules (25S, 5.8S and 5S rRNA) and at least 46 different proteins.

Its subcellular location is the cytoplasm. In terms of biological role, component of the ribosome, a large ribonucleoprotein complex responsible for the synthesis of proteins in the cell. The small ribosomal subunit (SSU) binds messenger RNAs (mRNAs) and translates the encoded message by selecting cognate aminoacyl-transfer RNA (tRNA) molecules. The large subunit (LSU) contains the ribosomal catalytic site termed the peptidyl transferase center (PTC), which catalyzes the formation of peptide bonds, thereby polymerizing the amino acids delivered by tRNAs into a polypeptide chain. The nascent polypeptides leave the ribosome through a tunnel in the LSU and interact with protein factors that function in enzymatic processing, targeting, and the membrane insertion of nascent chains at the exit of the ribosomal tunnel. The sequence is that of Large ribosomal subunit protein eL34A (rpl3401) from Schizosaccharomyces pombe (strain 972 / ATCC 24843) (Fission yeast).